The sequence spans 207 residues: Thymidylate kinase (207 aa).

7–14 (GCEGTGKT) contributes to the ATP binding site.

This sequence belongs to the thymidylate kinase family.

It catalyses the reaction dTMP + ATP = dTDP + ADP. Functionally, phosphorylation of dTMP to form dTDP in both de novo and salvage pathways of dTTP synthesis. This is Thymidylate kinase from Onion yellows phytoplasma (strain OY-M).